Consider the following 205-residue polypeptide: MIKVKICGITSPEDALTAVEAGADALGFVFYKESPRHIFPEEAARIINLLPPFVQAVGLFVNEAPEIVNQVSRNCRLGLVQLHGDETPDYCRKIEQRVMKAFRVRSLTCLDPIADYRMSGCLLDAYSPSFYGGTGKSFNWEIAREAMTRGHRIVLAGGLTPDNVAEAIRQVRPYAVDVSSGVESAPGRKDADKVREFIRNAKEAL.

The protein belongs to the TrpF family.

The enzyme catalyses N-(5-phospho-beta-D-ribosyl)anthranilate = 1-(2-carboxyphenylamino)-1-deoxy-D-ribulose 5-phosphate. Its pathway is amino-acid biosynthesis; L-tryptophan biosynthesis; L-tryptophan from chorismate: step 3/5. The sequence is that of N-(5'-phosphoribosyl)anthranilate isomerase from Trichlorobacter lovleyi (strain ATCC BAA-1151 / DSM 17278 / SZ) (Geobacter lovleyi).